Here is a 1420-residue protein sequence, read N- to C-terminus: DNA-directed RNA polymerase subunit beta' (1420 aa).

Zn(2+) is bound by residues C71, C73, C86, and C89. Mg(2+) contacts are provided by D461, D463, and D465. 4 residues coordinate Zn(2+): C815, C889, C896, and C899.

It belongs to the RNA polymerase beta' chain family. The RNAP catalytic core consists of 2 alpha, 1 beta, 1 beta' and 1 omega subunit. When a sigma factor is associated with the core the holoenzyme is formed, which can initiate transcription. Requires Mg(2+) as cofactor. Zn(2+) serves as cofactor.

The enzyme catalyses RNA(n) + a ribonucleoside 5'-triphosphate = RNA(n+1) + diphosphate. Functionally, DNA-dependent RNA polymerase catalyzes the transcription of DNA into RNA using the four ribonucleoside triphosphates as substrates. This is DNA-directed RNA polymerase subunit beta' from Haemophilus ducreyi (strain 35000HP / ATCC 700724).